The primary structure comprises 1068 residues: Ubiquitin-protein ligase E3B (1068 aa).

Met1 bears the N-acetylmethionine mark. Positions 29-58 (RERAAVVIQAHVRSFLCRSRLQRDIRREID) constitute an IQ domain. At Ser419 the chain carries Phosphoserine. The region spanning 702–1068 (SQHAMKGVIR…ISMNTGFELS (367 aa)) is the HECT domain. The Glycyl thioester intermediate role is filled by Cys1036.

In terms of tissue distribution, widely expressed.

The protein localises to the postsynaptic density. It carries out the reaction S-ubiquitinyl-[E2 ubiquitin-conjugating enzyme]-L-cysteine + [acceptor protein]-L-lysine = [E2 ubiquitin-conjugating enzyme]-L-cysteine + N(6)-ubiquitinyl-[acceptor protein]-L-lysine.. It participates in protein modification; protein ubiquitination. In terms of biological role, E3 ubiquitin-protein ligase which accepts ubiquitin from an E2 ubiquitin-conjugating enzyme in the form of a thioester and then directly transfers the ubiquitin to targeted substrates. Ubiquitinates BCKDK and targets it for degradation, thereby regulating various metabolic processes. Involved in the positive regulation of neurite branching in hippocampal neurons and the control of neuronal spine number and morphology, through the ubiquitination of PPP3CC. The polypeptide is Ubiquitin-protein ligase E3B (UBE3B) (Homo sapiens (Human)).